The following is a 393-amino-acid chain: NAD(P)H-quinone oxidoreductase subunit H, chloroplastic (393 aa).

Belongs to the complex I 49 kDa subunit family. As to quaternary structure, NDH is composed of at least 16 different subunits, 5 of which are encoded in the nucleus.

The protein resides in the plastid. It is found in the chloroplast thylakoid membrane. The catalysed reaction is a plastoquinone + NADH + (n+1) H(+)(in) = a plastoquinol + NAD(+) + n H(+)(out). It carries out the reaction a plastoquinone + NADPH + (n+1) H(+)(in) = a plastoquinol + NADP(+) + n H(+)(out). NDH shuttles electrons from NAD(P)H:plastoquinone, via FMN and iron-sulfur (Fe-S) centers, to quinones in the photosynthetic chain and possibly in a chloroplast respiratory chain. The immediate electron acceptor for the enzyme in this species is believed to be plastoquinone. Couples the redox reaction to proton translocation, and thus conserves the redox energy in a proton gradient. The protein is NAD(P)H-quinone oxidoreductase subunit H, chloroplastic of Amborella trichopoda.